A 341-amino-acid polypeptide reads, in one-letter code: UDP-3-O-acylglucosamine N-acyltransferase (341 aa).

Histidine 241 functions as the Proton acceptor in the catalytic mechanism.

It belongs to the transferase hexapeptide repeat family. LpxD subfamily. In terms of assembly, homotrimer.

It catalyses the reaction a UDP-3-O-[(3R)-3-hydroxyacyl]-alpha-D-glucosamine + a (3R)-hydroxyacyl-[ACP] = a UDP-2-N,3-O-bis[(3R)-3-hydroxyacyl]-alpha-D-glucosamine + holo-[ACP] + H(+). It functions in the pathway bacterial outer membrane biogenesis; LPS lipid A biosynthesis. Functionally, catalyzes the N-acylation of UDP-3-O-acylglucosamine using 3-hydroxyacyl-ACP as the acyl donor. Is involved in the biosynthesis of lipid A, a phosphorylated glycolipid that anchors the lipopolysaccharide to the outer membrane of the cell. This chain is UDP-3-O-acylglucosamine N-acyltransferase, found in Haemophilus ducreyi (strain 35000HP / ATCC 700724).